Reading from the N-terminus, the 356-residue chain is MNKILFYFFFFLTLILSATVYLFGGPMMLFFINYKTDLLKVDDVYNHEIYSNQSAAIPKIIHQTWKTNEIPEKWVGAQKSCIDLHPDYEYVLWTDESMREFIATDYPWFLTQYDSYPYNIERADVVRYFILYKYGGIYLDLDVGCNRTLDPLLHYPAWVRRTSPSGISNNVMGFAKGHPFLLQVVRNLPRFAFNYHFPYLTVMYSTGPLFLSIIWSAWRKLPDAEAWHHIWVMVPELYEKSHHAFFEIYEGSSWHDSDAGFVFYMLHHWAIFTFLGFLTFFIVVYFIFGYALKPAARVSRTGRRVFSSPFSKTSPSRWKIFHRFTSSNEKYDQTRSDSLPFMSDYDLESQTQSHSP.

A helical membrane pass occupies residues 4–24; sequence ILFYFFFFLTLILSATVYLFG. Asparagine 52 and asparagine 146 each carry an N-linked (GlcNAc...) asparagine glycan. 2 consecutive transmembrane segments (helical) span residues 197 to 217 and 269 to 289; these read FPYL…IWSA and WAIF…FIFG. 3 positions are modified to phosphoserine: serine 307, serine 353, and serine 355.

The protein belongs to the glycosyltransferase 32 family.

It localises to the endoplasmic reticulum membrane. It is found in the golgi apparatus. The protein resides in the cis-Golgi network membrane. Its subcellular location is the trans-Golgi network membrane. With imt1 and imt2, is required for the synthesis of mannosylinositol phosphoceramide (MIPC). Catalyzes the addition of mannosyl to inositol phosphoceramide (IPC). MIPC is essential for cell morphology, cell-surface distribution of ergosterol, localization for plasma-membrane transporters, and lipid-raft-mediated endocytosis of plasma membrane proteins to the vacuole. This chain is Inositol phosphoceramide mannosyltransferase 3, found in Schizosaccharomyces pombe (strain 972 / ATCC 24843) (Fission yeast).